The following is a 318-amino-acid chain: Acetyl-coenzyme A carboxylase carboxyl transferase subunit alpha (318 aa).

A CoA carboxyltransferase C-terminal domain is found at 31–292 (DLIKEVSALE…KDAILRQLEL (262 aa)).

Belongs to the AccA family. Acetyl-CoA carboxylase is a heterohexamer composed of biotin carboxyl carrier protein (AccB), biotin carboxylase (AccC) and two subunits each of ACCase subunit alpha (AccA) and ACCase subunit beta (AccD).

Its subcellular location is the cytoplasm. The catalysed reaction is N(6)-carboxybiotinyl-L-lysyl-[protein] + acetyl-CoA = N(6)-biotinyl-L-lysyl-[protein] + malonyl-CoA. Its pathway is lipid metabolism; malonyl-CoA biosynthesis; malonyl-CoA from acetyl-CoA: step 1/1. Component of the acetyl coenzyme A carboxylase (ACC) complex. First, biotin carboxylase catalyzes the carboxylation of biotin on its carrier protein (BCCP) and then the CO(2) group is transferred by the carboxyltransferase to acetyl-CoA to form malonyl-CoA. The protein is Acetyl-coenzyme A carboxylase carboxyl transferase subunit alpha of Hydrogenovibrio crunogenus (strain DSM 25203 / XCL-2) (Thiomicrospira crunogena).